Reading from the N-terminus, the 257-residue chain is BTB/POZ domain-containing protein KCTD1 (257 aa).

Positions Met-1–Leu-25 are disordered. Phosphoserine occurs at positions 9 and 12. Positions Ser-9–Leu-25 are enriched in polar residues. A BTB domain is found at Ala-30–Asp-100.

In terms of assembly, forms homopentamers. Interacts with KCTD15, probably forming heteropentamers depending on its abundance in a cell-type dependent manner. Interacts with TFAP2A, TFAP2B and TFAP2C via the BTB domain. Post-translationally, sumoylated. In terms of tissue distribution, expressed in mammary gland, kidney, brain and ovary.

It localises to the nucleus. In terms of biological role, may repress the transcriptional activity of AP-2 family members, including TFAP2A, TFAP2B and TFAP2C to various extent. The sequence is that of BTB/POZ domain-containing protein KCTD1 (KCTD1) from Homo sapiens (Human).